We begin with the raw amino-acid sequence, 489 residues long: Long chain base biosynthesis protein 2a (489 aa).

The helical transmembrane segment at 2–22 (ITIPYLTAVSTYFSYGLLFAF) threads the bilayer. Lys311 is modified (N6-(pyridoxal phosphate)lysine).

Belongs to the class-II pyridoxal-phosphate-dependent aminotransferase family. As to quaternary structure, heterodimer with LCB1. Component of the serine palmitoyltransferase (SPT) complex, composed of LCB1 and LCB2 (LCB2a or LCB2b). It depends on pyridoxal 5'-phosphate as a cofactor. As to expression, ubiquitous. Detected in leaves, roots, stems, flowers and at a lower level in mature seeds.

It localises to the endoplasmic reticulum membrane. It catalyses the reaction L-serine + hexadecanoyl-CoA + H(+) = 3-oxosphinganine + CO2 + CoA. It functions in the pathway lipid metabolism; sphingolipid metabolism. Functionally, serine palmitoyltransferase (SPT). The heterodimer formed with LCB1 constitutes the catalytic core. Involved in the regulation of the programmed cell death (PCD) signaling pathway. Plays an important role during male gametogenesis and embryogenesis. This is Long chain base biosynthesis protein 2a (LCB2a) from Arabidopsis thaliana (Mouse-ear cress).